Consider the following 532-residue polypeptide: Glucose-6-phosphate isomerase (532 aa).

Residue glutamate 330 is the Proton donor of the active site. Active-site residues include histidine 359 and lysine 461.

This sequence belongs to the GPI family.

It localises to the cytoplasm. It catalyses the reaction alpha-D-glucose 6-phosphate = beta-D-fructose 6-phosphate. Its pathway is carbohydrate biosynthesis; gluconeogenesis. It participates in carbohydrate degradation; glycolysis; D-glyceraldehyde 3-phosphate and glycerone phosphate from D-glucose: step 2/4. In terms of biological role, catalyzes the reversible isomerization of glucose-6-phosphate to fructose-6-phosphate. This is Glucose-6-phosphate isomerase from Synechococcus sp. (strain CC9902).